A 293-amino-acid chain; its full sequence is RNA pseudouridylate synthase domain-containing protein 1 (293 aa).

The active site involves Asp67.

Belongs to the pseudouridine synthase RluA family.

The polypeptide is RNA pseudouridylate synthase domain-containing protein 1 (rpusd1) (Danio rerio (Zebrafish)).